The following is a 362-amino-acid chain: Probable endopolygalacturonase II (362 aa).

A signal peptide spans 1-20 (MHSFASLLAYGLAAGATLAS). Residues 21-27 (ASPIEAR) constitute a propeptide that is removed on maturation. A disulfide bond links cysteine 30 and cysteine 45. The stretch at 156–186 (SDDITLTDITINNADGDSLGGHNTDAFDVGN) is one PbH1 1 repeat. The active-site Proton donor is the aspartate 201. Cysteine 203 and cysteine 219 are disulfide-bonded. PbH1 repeat units lie at residues 209–229 (GENI…SIGS), 238–259 (VKNV…RIKT), 267–289 (VSEI…VIQQ), and 301–322 (TNGV…DSKA). Histidine 223 is an active-site residue. N-linked (GlcNAc...) asparagine glycosylation is present at asparagine 240. 2 cysteine pairs are disulfide-bonded: cysteine 329–cysteine 334 and cysteine 353–cysteine 362.

This sequence belongs to the glycosyl hydrolase 28 family.

It localises to the secreted. It carries out the reaction (1,4-alpha-D-galacturonosyl)n+m + H2O = (1,4-alpha-D-galacturonosyl)n + (1,4-alpha-D-galacturonosyl)m.. Its function is as follows. Involved in maceration and soft-rotting of plant tissue. Hydrolyzes the 1,4-alpha glycosidic bonds of de-esterified pectate in the smooth region of the plant cell wall. The chain is Probable endopolygalacturonase II (pgaII) from Aspergillus kawachii (strain NBRC 4308) (White koji mold).